Consider the following 306-residue polypeptide: Putative beta-lactamase HcpD (306 aa).

The first 25 residues, 1–25, serve as a signal peptide directing secretion; that stretch reads MIKSWTKKWFLILFLMASCSSYLVA. 4 TPR repeats span residues 28-61, 96-133, 168-205, and 240-277; these read GEKYFKMATQAFKRGDYHKAVAFYKRSCNLRVGV, HLACASLGSMYEDGDGVQKNLPKAIYYYRRGCHLKGGV, GISCNFVGYMYRNAKGVQKDLKKALANFKRGCHLKDGA, and GSGCHNVAVMYYTGKGVPKDLDKAISYYKKGCTLGFSG. Disulfide bonds link C55–C63, C91–C99, C127–C135, C163–C171, C199–C207, C235–C243, and C271–C279.

It belongs to the hcp beta-lactamase family.

The protein localises to the secreted. The catalysed reaction is a beta-lactam + H2O = a substituted beta-amino acid. In terms of biological role, may hydrolyze 6-aminopenicillinic acid and 7-aminocephalosporanic acid (ACA) derivatives. Binds to penicillin. The polypeptide is Putative beta-lactamase HcpD (hcpD) (Helicobacter pylori (strain ATCC 700392 / 26695) (Campylobacter pylori)).